Consider the following 32-residue polypeptide: Photosystem II reaction center protein T (32 aa).

The chain crosses the membrane as a helical span at residues 3 to 23; it reads AFAYVLILTLAVVTLFFAVAF.

The protein belongs to the PsbT family. As to quaternary structure, PSII is composed of 1 copy each of membrane proteins PsbA, PsbB, PsbC, PsbD, PsbE, PsbF, PsbH, PsbI, PsbJ, PsbK, PsbL, PsbM, PsbT, PsbX, PsbY, Psb30/Ycf12, peripheral proteins PsbO, CyanoQ (PsbQ), PsbU, PsbV and a large number of cofactors. It forms dimeric complexes.

The protein resides in the cellular thylakoid membrane. Its function is as follows. Found at the monomer-monomer interface of the photosystem II (PS II) dimer, plays a role in assembly and dimerization of PSII. PSII is a light-driven water plastoquinone oxidoreductase, using light energy to abstract electrons from H(2)O, generating a proton gradient subsequently used for ATP formation. This Prochlorococcus marinus (strain MIT 9301) protein is Photosystem II reaction center protein T.